Reading from the N-terminus, the 40-residue chain is Large ribosomal subunit protein bL36B (40 aa).

The protein belongs to the bacterial ribosomal protein bL36 family.

The sequence is that of Large ribosomal subunit protein bL36B from Leifsonia xyli subsp. xyli (strain CTCB07).